The chain runs to 149 residues: 3-dehydroquinate dehydratase (149 aa).

Y23 serves as the catalytic Proton acceptor. Residues N74, H80, and D87 each contribute to the substrate site. H100 (proton donor) is an active-site residue. Residues 101–102 (LS) and R111 contribute to the substrate site.

This sequence belongs to the type-II 3-dehydroquinase family. As to quaternary structure, homododecamer.

The enzyme catalyses 3-dehydroquinate = 3-dehydroshikimate + H2O. The protein operates within metabolic intermediate biosynthesis; chorismate biosynthesis; chorismate from D-erythrose 4-phosphate and phosphoenolpyruvate: step 3/7. In terms of biological role, catalyzes a trans-dehydration via an enolate intermediate. The sequence is that of 3-dehydroquinate dehydratase from Ruegeria pomeroyi (strain ATCC 700808 / DSM 15171 / DSS-3) (Silicibacter pomeroyi).